The chain runs to 527 residues: Endogenous retrovirus group FC1 member 1 Env polyprotein (527 aa).

Residues 1–411 form a surface protein region; that stretch reads MNSPCDRLQQ…EPRPQNKSKW (411 aa). Residues 280–283 carry the CXXC motif; it reads CFLC. Residues 412 to 432 form a fusion peptide region; it reads AIFLPLVLGISLASSLVASGL. Residues 412–527 form a transmembrane protein region; sequence AIFLPLVLGI…LKKKKSSKRS (116 aa). The short motif at 477–493 is the CKS-17 element; that stretch reads AQNRQALDLLMAEKGRT. Cysteine 494 and cysteine 501 form a disulfide bridge. The CX6CC motif lies at 494-502; sequence CLFLQEECC.

It belongs to the gamma type-C retroviral envelope protein family. HERV class-I F(c)2 env subfamily. In terms of processing, the CXXC motif is highly conserved across a broad range of retroviral envelope proteins. It is thought to participate in the formation of a labile disulfide bond possibly with the CX6CC motif present in the transmembrane domain. As to expression, low expression in skin and testis.

The protein localises to the virion. Its function is as follows. Retroviral envelope proteins mediate receptor recognition and membrane fusion during early infection. Endogenous envelope proteins may have kept, lost or modified their original function during evolution. This endogenous envelope protein has lost its original fusogenic properties. In Homo sapiens (Human), this protein is Endogenous retrovirus group FC1 member 1 Env polyprotein (ERVFC1-1).